Consider the following 180-residue polypeptide: Putative 5'(3')-deoxyribonucleotidase (180 aa).

D9 serves as the catalytic Nucleophile. Mg(2+)-binding residues include D9, D11, and D135. The active-site Proton donor is D11.

The protein belongs to the 5'(3')-deoxyribonucleotidase family. The cofactor is Mg(2+).

Functionally, dephosphorylates the 5' and 2'(3')-phosphates of deoxyribonucleotides. The protein is Putative 5'(3')-deoxyribonucleotidase of Staphylococcus aureus (strain MSSA476).